A 374-amino-acid chain; its full sequence is UDP-N-acetylglucosamine--N-acetylmuramyl-(pentapeptide) pyrophosphoryl-undecaprenol N-acetylglucosamine transferase (374 aa).

UDP-N-acetyl-alpha-D-glucosamine-binding positions include 13-15 (TGG), N124, R165, S193, and Q294.

This sequence belongs to the glycosyltransferase 28 family. MurG subfamily.

The protein resides in the cell inner membrane. The enzyme catalyses di-trans,octa-cis-undecaprenyl diphospho-N-acetyl-alpha-D-muramoyl-L-alanyl-D-glutamyl-meso-2,6-diaminopimeloyl-D-alanyl-D-alanine + UDP-N-acetyl-alpha-D-glucosamine = di-trans,octa-cis-undecaprenyl diphospho-[N-acetyl-alpha-D-glucosaminyl-(1-&gt;4)]-N-acetyl-alpha-D-muramoyl-L-alanyl-D-glutamyl-meso-2,6-diaminopimeloyl-D-alanyl-D-alanine + UDP + H(+). It participates in cell wall biogenesis; peptidoglycan biosynthesis. Its function is as follows. Cell wall formation. Catalyzes the transfer of a GlcNAc subunit on undecaprenyl-pyrophosphoryl-MurNAc-pentapeptide (lipid intermediate I) to form undecaprenyl-pyrophosphoryl-MurNAc-(pentapeptide)GlcNAc (lipid intermediate II). The polypeptide is UDP-N-acetylglucosamine--N-acetylmuramyl-(pentapeptide) pyrophosphoryl-undecaprenol N-acetylglucosamine transferase (Rhizobium meliloti (strain 1021) (Ensifer meliloti)).